Reading from the N-terminus, the 117-residue chain is UPF0321 protein PJ695.01c (117 aa).

Positions 1 to 17 (MLLLLYICCLFLKFILA) are cleaved as a signal peptide. Residues Asn-39, Asn-65, Asn-71, and Asn-104 are each glycosylated (N-linked (GlcNAc...) asparagine).

This sequence belongs to the UPF0321 family.

The polypeptide is UPF0321 protein PJ695.01c (Schizosaccharomyces pombe (strain 972 / ATCC 24843) (Fission yeast)).